A 72-amino-acid polypeptide reads, in one-letter code: Translation initiation factor IF-1 (72 aa).

One can recognise an S1-like domain in the interval 1 to 72 (MSDKSIKMQA…SNGRITYRHK (72 aa)).

It belongs to the IF-1 family. Component of the 30S ribosomal translation pre-initiation complex which assembles on the 30S ribosome in the order IF-2 and IF-3, IF-1 and N-formylmethionyl-tRNA(fMet); mRNA recruitment can occur at any time during PIC assembly.

The protein resides in the cytoplasm. In terms of biological role, one of the essential components for the initiation of protein synthesis. Stabilizes the binding of IF-2 and IF-3 on the 30S subunit to which N-formylmethionyl-tRNA(fMet) subsequently binds. Helps modulate mRNA selection, yielding the 30S pre-initiation complex (PIC). Upon addition of the 50S ribosomal subunit IF-1, IF-2 and IF-3 are released leaving the mature 70S translation initiation complex. The chain is Translation initiation factor IF-1 from Mycoplasmopsis pulmonis (strain UAB CTIP) (Mycoplasma pulmonis).